A 353-amino-acid chain; its full sequence is Photosystem II protein D1 (353 aa).

The residue at position 2 (T2) is an N-acetylthreonine. Phosphothreonine is present on T2. The next 3 membrane-spanning stretches (helical) occupy residues 29–46 (YIGW…TATS), 118–133 (HFLL…EWEL), and 142–156 (WIAV…AATA). Residue H118 participates in chlorophyll a binding. A pheophytin a-binding site is contributed by Y126. Positions 170 and 189 each coordinate [CaMn4O5] cluster. The chain crosses the membrane as a helical span at residues 197-218 (FHMLGVAGVFGGSLFSAMHGSL). Position 198 (H198) interacts with chlorophyll a. Residues H215 and 264-265 (SF) contribute to the a quinone site. H215 contributes to the Fe cation binding site. H272 provides a ligand contact to Fe cation. The chain crosses the membrane as a helical span at residues 274–288 (FLAAWPVIGIWFTSL). The [CaMn4O5] cluster site is built by H332, E333, D342, and A344. The propeptide occupies 345–353 (AVEAPSTIG).

It belongs to the reaction center PufL/M/PsbA/D family. In terms of assembly, PSII is composed of 1 copy each of membrane proteins PsbA, PsbB, PsbC, PsbD, PsbE, PsbF, PsbH, PsbI, PsbJ, PsbK, PsbL, PsbM, PsbT, PsbX, PsbY, PsbZ, Psb30/Ycf12, at least 3 peripheral proteins of the oxygen-evolving complex and a large number of cofactors. It forms dimeric complexes. Requires The D1/D2 heterodimer binds P680, chlorophylls that are the primary electron donor of PSII, and subsequent electron acceptors. It shares a non-heme iron and each subunit binds pheophytin, quinone, additional chlorophylls, carotenoids and lipids. D1 provides most of the ligands for the Mn4-Ca-O5 cluster of the oxygen-evolving complex (OEC). There is also a Cl(-1) ion associated with D1 and D2, which is required for oxygen evolution. The PSII complex binds additional chlorophylls, carotenoids and specific lipids. as cofactor. Tyr-161 forms a radical intermediate that is referred to as redox-active TyrZ, YZ or Y-Z. In terms of processing, C-terminally processed by CTPA; processing is essential to allow assembly of the oxygen-evolving complex and thus photosynthetic growth.

It localises to the plastid. It is found in the chloroplast thylakoid membrane. The catalysed reaction is 2 a plastoquinone + 4 hnu + 2 H2O = 2 a plastoquinol + O2. Functionally, photosystem II (PSII) is a light-driven water:plastoquinone oxidoreductase that uses light energy to abstract electrons from H(2)O, generating O(2) and a proton gradient subsequently used for ATP formation. It consists of a core antenna complex that captures photons, and an electron transfer chain that converts photonic excitation into a charge separation. The D1/D2 (PsbA/PsbD) reaction center heterodimer binds P680, the primary electron donor of PSII as well as several subsequent electron acceptors. The sequence is that of Photosystem II protein D1 from Landoltia punctata (Dotted duckmeat).